A 441-amino-acid polypeptide reads, in one-letter code: G2/mitotic-specific cyclin-2 (441 aa).

This sequence belongs to the cyclin family. Cyclin AB subfamily. In terms of assembly, interacts with the CDC2 and CDK2 protein kinases to form a serine/threonine kinase holoenzyme complex. The cyclin subunit imparts substrate specificity to the complex.

In terms of biological role, essential for the control of the cell cycle at the G2/M (mitosis) transition. G2/M cyclins accumulate steadily during G2 and are abruptly destroyed at mitosis. This Antirrhinum majus (Garden snapdragon) protein is G2/mitotic-specific cyclin-2.